Here is a 295-residue protein sequence, read N- to C-terminus: Protoheme IX farnesyltransferase (295 aa).

Helical transmembrane passes span 9–29 (ITKP…FFLA), 36–56 (FGVF…GCVF), 80–100 (LVSL…GVAL), 108–128 (LAAL…SLYL), 135–155 (GTLV…CAVT), 163–183 (LTLL…IAIF), 209–229 (IMLY…GGYA), 230–250 (GLNY…MAWK), and 265–285 (FVFS…DFQV).

Belongs to the UbiA prenyltransferase family. Protoheme IX farnesyltransferase subfamily.

The protein resides in the cell inner membrane. The enzyme catalyses heme b + (2E,6E)-farnesyl diphosphate + H2O = Fe(II)-heme o + diphosphate. It participates in porphyrin-containing compound metabolism; heme O biosynthesis; heme O from protoheme: step 1/1. Converts heme B (protoheme IX) to heme O by substitution of the vinyl group on carbon 2 of heme B porphyrin ring with a hydroxyethyl farnesyl side group. This chain is Protoheme IX farnesyltransferase, found in Pseudomonas savastanoi pv. phaseolicola (strain 1448A / Race 6) (Pseudomonas syringae pv. phaseolicola (strain 1448A / Race 6)).